Here is a 125-residue protein sequence, read N- to C-terminus: Holo-[acyl-carrier-protein] synthase (125 aa).

2 residues coordinate Mg(2+): aspartate 8 and glutamate 57.

Belongs to the P-Pant transferase superfamily. AcpS family. The cofactor is Mg(2+).

It is found in the cytoplasm. The catalysed reaction is apo-[ACP] + CoA = holo-[ACP] + adenosine 3',5'-bisphosphate + H(+). Functionally, transfers the 4'-phosphopantetheine moiety from coenzyme A to a Ser of acyl-carrier-protein. The sequence is that of Holo-[acyl-carrier-protein] synthase from Dechloromonas aromatica (strain RCB).